The sequence spans 117 residues: Ribonuclease P protein component (117 aa).

This sequence belongs to the RnpA family. In terms of assembly, consists of a catalytic RNA component (M1 or rnpB) and a protein subunit.

It carries out the reaction Endonucleolytic cleavage of RNA, removing 5'-extranucleotides from tRNA precursor.. Its function is as follows. RNaseP catalyzes the removal of the 5'-leader sequence from pre-tRNA to produce the mature 5'-terminus. It can also cleave other RNA substrates such as 4.5S RNA. The protein component plays an auxiliary but essential role in vivo by binding to the 5'-leader sequence and broadening the substrate specificity of the ribozyme. The protein is Ribonuclease P protein component of Lactococcus lactis subsp. cremoris (strain MG1363).